We begin with the raw amino-acid sequence, 396 residues long: Probable 20S rRNA accumulation protein 4 (396 aa).

It belongs to the TSR4 family.

The protein localises to the cytoplasm. It is found in the nucleus. Its subcellular location is the nucleolus. In terms of biological role, required for processing of the 20S pre-rRNA at site D to generate mature 18S rRNA. This is Probable 20S rRNA accumulation protein 4 from Schizosaccharomyces pombe (strain 972 / ATCC 24843) (Fission yeast).